The chain runs to 929 residues: Transcription initiation factor TFIID subunit 3 (929 aa).

Disordered stretches follow at residues 131 to 152 and 176 to 197; these read IVSS…TSAE and LGKR…RPRL. A phosphoserine mark is found at serine 183, serine 199, serine 229, and serine 243. Disordered stretches follow at residues 221–358 and 405–578; these read TQKI…ETIQ and DPFE…PWKE. Residues 265–288 show a composition bias toward low complexity; it reads TKSFTPKTKTKTSSPGQKTKSPKT. At lysine 266 the chain carries N6-acetyllysine. Residues serine 291, serine 297, and serine 301 each carry the phosphoserine modification. Polar residues-rich tracts occupy residues 340-358 and 434-466; these read PNRT…ETIQ and PKAS…SWTM. Threonine 501 is modified (phosphothreonine). Positions 504–514 are enriched in basic and acidic residues; the sequence is PLHKVYEEKTK. Residues 523–537 show a composition bias toward basic residues; the sequence is KKLKKELKTKMKKKE. A compositionally biased stretch (basic and acidic residues) spans 538–578; sequence KQRDREREKDKNKDKSKEKDKVKEKEKDKETGRETKYPWKE. Lysine 581 is covalently cross-linked (Glycyl lysine isopeptide (Lys-Gly) (interchain with G-Cter in SUMO2)). Basic and acidic residues-rich tracts occupy residues 603–612 and 621–648; these read KLKDGLVRKE and KDRE…DKMK. Residues 603 to 658 are disordered; that stretch reads KLKDGLVRKEKEKHKDKKKDREKGKKDKDKREKEKVKDKGREDKMKAPAPPLVLPP. Serine 667 carries the phosphoserine modification. Over residues 692–701 the composition is skewed to basic and acidic residues; the sequence is EKEKVKEKEK. Positions 692 to 748 are disordered; it reads EKEKVKEKEKKKDKKEKKKKKEKEKEKKEKEREKEKREREKREKEKEKHKHEKIKVE. A compositionally biased stretch (basic residues) spans 702–713; that stretch reads KKDKKEKKKKKE. Residues 714–737 are compositionally biased toward basic and acidic residues; sequence KEKEKKEKEREKEKREREKREKEK. A Glycyl lysine isopeptide (Lys-Gly) (interchain with G-Cter in SUMO2) cross-link involves residue lysine 746. Serine 755 bears the Phosphoserine mark. Lysine 776 is modified (N6-acetyllysine). Over residues 778-787 the composition is skewed to low complexity; the sequence is VPAPEAKPAP. Positions 778–807 are disordered; that stretch reads VPAPEAKPAPSQNRPKTPPPAPAPAPGPML. Over residues 793–804 the composition is skewed to pro residues; that stretch reads KTPPPAPAPAPG. The PHD-type zinc finger occupies 865-915; the sequence is IWICPGCNKPDDGSPMIGCDDCDDWYHWPCVGIMTAPPEEMQWFCPKCANK. Zn(2+)-binding residues include cysteine 868, cysteine 871, cysteine 883, cysteine 886, histidine 891, cysteine 894, cysteine 909, and cysteine 912.

The protein belongs to the TAF3 family. As to quaternary structure, component of the TFIID basal transcription factor complex, composed of TATA-box-binding protein TBP, and a number of TBP-associated factors (TAFs), including TAF1, TAF2, TAF3, TAF4, TAF5, TAF6, TAF7, TAF8, TAF9, TAF10, TAF11, TAF12 and TAF13. Interacts with TAF10 via the histone fold. Interacts with TAF13, TBP, SAP130 and GCN5L2. Interacts with TBPL2.

The protein localises to the nucleus. Functionally, the TFIID basal transcription factor complex plays a major role in the initiation of RNA polymerase II (Pol II)-dependent transcription. TFIID recognizes and binds promoters with or without a TATA box via its subunit TBP, a TATA-box-binding protein, and promotes assembly of the pre-initiation complex (PIC). The TFIID complex consists of TBP and TBP-associated factors (TAFs), including TAF1, TAF2, TAF3, TAF4, TAF5, TAF6, TAF7, TAF8, TAF9, TAF10, TAF11, TAF12 and TAF13. The TFIID complex structure can be divided into 3 modules TFIID-A, TFIID-B, and TFIID-C. TAF3 forms the TFIID-A module together with TAF5 and TBP. Required in complex with TBPL2 for the differentiation of myoblasts into myocytes. The TAF3-TBPL2 complex replaces TFIID at specific promoters at an early stage in the differentiation process. This Homo sapiens (Human) protein is Transcription initiation factor TFIID subunit 3 (TAF3).